Consider the following 136-residue polypeptide: Small ribosomal subunit protein uS19 (136 aa).

This sequence belongs to the universal ribosomal protein uS19 family.

Its function is as follows. Protein S19 forms a complex with S13 that binds strongly to the 16S ribosomal RNA. The polypeptide is Small ribosomal subunit protein uS19 (Methanosphaera stadtmanae (strain ATCC 43021 / DSM 3091 / JCM 11832 / MCB-3)).